A 116-amino-acid polypeptide reads, in one-letter code: Large ribosomal subunit protein bL20 (116 aa).

This sequence belongs to the bacterial ribosomal protein bL20 family.

Functionally, binds directly to 23S ribosomal RNA and is necessary for the in vitro assembly process of the 50S ribosomal subunit. It is not involved in the protein synthesizing functions of that subunit. This Synechococcus elongatus (strain ATCC 33912 / PCC 7942 / FACHB-805) (Anacystis nidulans R2) protein is Large ribosomal subunit protein bL20.